A 266-amino-acid chain; its full sequence is Expansin-A13 (266 aa).

The N-terminal stretch at 1-19 is a signal peptide; the sequence is MQRFLLPLLFLALSPPAIC. Residues 58 to 171 form the Expansin-like EG45 domain; sequence GGACGYGDLV…RRINCRKEGS (114 aa). The 80-residue stretch at 181–260 folds into the Expansin-like CBD domain; sequence IFISVLITNV…NWNYGQTFEG (80 aa).

Belongs to the expansin family. Expansin A subfamily.

The protein resides in the secreted. It localises to the cell wall. Its subcellular location is the membrane. Causes loosening and extension of plant cell walls by disrupting non-covalent bonding between cellulose microfibrils and matrix glucans. No enzymatic activity has been found. The sequence is that of Expansin-A13 (EXPA13) from Arabidopsis thaliana (Mouse-ear cress).